A 183-amino-acid polypeptide reads, in one-letter code: Beta-defensin 129 (183 aa).

The signal sequence occupies residues 1 to 19; it reads MKLLFPVFASLMLQYQVNT. 3 disulfides stabilise this stretch: cysteine 27/cysteine 53, cysteine 34/cysteine 48, and cysteine 38/cysteine 54. Residues 141 to 183 are disordered; sequence TATSTKSNTKESRDSATASPPPAPPPPNILPTPSLELEKAEEQ. Positions 159 to 170 are enriched in pro residues; it reads SPPPAPPPPNIL.

It belongs to the beta-defensin family.

It is found in the secreted. In terms of biological role, has antibacterial activity. The protein is Beta-defensin 129 (DEFB129) of Pongo pygmaeus (Bornean orangutan).